Reading from the N-terminus, the 252-residue chain is 5'-methylthioadenosine/S-adenosylhomocysteine nucleosidase (252 aa).

Glu-20 acts as the Proton acceptor in catalysis. Substrate contacts are provided by residues Gly-86, Ile-160, and 181–182 (ME). The Proton donor role is filled by Asp-205.

It belongs to the PNP/UDP phosphorylase family. MtnN subfamily. As to quaternary structure, homodimer.

It carries out the reaction S-adenosyl-L-homocysteine + H2O = S-(5-deoxy-D-ribos-5-yl)-L-homocysteine + adenine. The catalysed reaction is S-methyl-5'-thioadenosine + H2O = 5-(methylsulfanyl)-D-ribose + adenine. It catalyses the reaction 5'-deoxyadenosine + H2O = 5-deoxy-D-ribose + adenine. It participates in amino-acid biosynthesis; L-methionine biosynthesis via salvage pathway; S-methyl-5-thio-alpha-D-ribose 1-phosphate from S-methyl-5'-thioadenosine (hydrolase route): step 1/2. In terms of biological role, catalyzes the irreversible cleavage of the glycosidic bond in both 5'-methylthioadenosine (MTA) and S-adenosylhomocysteine (SAH/AdoHcy) to adenine and the corresponding thioribose, 5'-methylthioribose and S-ribosylhomocysteine, respectively. Also cleaves 5'-deoxyadenosine, a toxic by-product of radical S-adenosylmethionine (SAM) enzymes, into 5-deoxyribose and adenine. Thus, is required for in vivo function of the radical SAM enzymes biotin synthase and lipoic acid synthase, that are inhibited by 5'-deoxyadenosine accumulation. The polypeptide is 5'-methylthioadenosine/S-adenosylhomocysteine nucleosidase (Buchnera aphidicola subsp. Baizongia pistaciae (strain Bp)).